Reading from the N-terminus, the 503-residue chain is Hemogen (503 aa).

Composition is skewed to basic residues over residues Met-1 to Leu-10 and Lys-61 to Gln-79. Residues Met-1–Val-129 are disordered. A necessary for nuclear localization region spans residues Arg-7–Glu-87. Phosphoserine occurs at positions 90, 103, 124, 153, 158, 171, 213, 223, 228, 241, and 269. Thr-286 is subject to Phosphothreonine. Positions Gln-381–Phe-503 are disordered. Positions Gln-385–Glu-396 are enriched in low complexity. Phosphoserine occurs at positions 387 and 394. Over residues Cys-426–Leu-436 the composition is skewed to basic and acidic residues.

As to expression, expressed in hematopoietic precursor cells. Highly expressed in bone marrow, the red pulp of the spleen and round spermatids. Weakly expressed in peripheral blood cells.

Its subcellular location is the nucleus. Regulates the proliferation and differentiation of hematopoietic cells. Overexpression block the TPA-induced megakaryocytic differentiation in the K562 cell model. May also prevent cell apoptosis through the activation of the nuclear factor-kappa B (NF-kB). The protein is Hemogen (Hemgn) of Mus musculus (Mouse).